The primary structure comprises 160 residues: Small ribosomal subunit protein uS17m (160 aa).

This sequence belongs to the universal ribosomal protein uS17 family. As to quaternary structure, component of the mitochondrial ribosome small subunit (28S) which comprises a 12S rRNA and about 30 distinct proteins.

Its subcellular location is the mitochondrion. The chain is Small ribosomal subunit protein uS17m (mrps-17) from Caenorhabditis elegans.